The chain runs to 350 residues: Proton-activated chloride channel (350 aa).

The segment at 1–51 (MEAIRKELSRSYQELNDETDPIARDPEGAQEEEQEEAASAVVPDRDSDRSN) is disordered. Residues 1 to 63 (MEAIRKELSR…VHFSRTCLKN (63 aa)) are Cytoplasmic-facing. A helical membrane pass occupies residues 64–84 (VFSVLLIFVYLLLMGVAVFLV). Topologically, residues 85 to 297 (YQTITDFRDK…KDPYIQEIQD (213 aa)) are extracellular. The helical transmembrane segment at 298–318 (IITANPWSMIALLCSVFLVLF) threads the bilayer. The Cytoplasmic portion of the chain corresponds to 319-350 (KAADFAKLSVKWMIKVRRRHLKKRTRELNHIS).

Belongs to the proton-activated chloride channel family.

Its subcellular location is the cell membrane. The enzyme catalyses chloride(in) = chloride(out). Its function is as follows. Chloride channel gated by pH that facilitates the entry of chloride ions into cells upon exposure to extracellular acidic pH. This is Proton-activated chloride channel from Xenopus laevis (African clawed frog).